The primary structure comprises 43 residues: Potassium channel toxin gamma-KTx 4.7 (43 aa).

4 disulfides stabilise this stretch: C5/C23, C11/C34, C20/C39, and C24/C41.

It belongs to the ergtoxin family. Gamma-KTx 4 subfamily. As to expression, expressed by the venom gland.

It localises to the secreted. Functionally, reversibly blocks Kv11/ERG potassium channels. This chain is Potassium channel toxin gamma-KTx 4.7, found in Centruroides limpidus (Mexican scorpion).